Consider the following 284-residue polypeptide: Small ribosomal subunit protein uS5y/uS5u/uS5v (284 aa).

Basic and acidic residues predominate over residues 1 to 19; it reads MAERGGESGAERGGDRGDF. A disordered region spans residues 1–51; sequence MAERGGESGAERGGDRGDFGRGFGGGRGGGRGRDRGPRGRGRRGGRASEET. The span at 20 to 29 shows a compositional bias: gly residues; the sequence is GRGFGGGRGG. Positions 95–158 constitute an S5 DRBM domain; the sequence is LKDEVMKIMP…ILAKLSVVPV (64 aa).

This sequence belongs to the universal ribosomal protein uS5 family.

This chain is Small ribosomal subunit protein uS5y/uS5u/uS5v (RPS2B), found in Arabidopsis thaliana (Mouse-ear cress).